A 384-amino-acid polypeptide reads, in one-letter code: Actin-related protein 2/3 complex subunit 1 (384 aa).

WD repeat units lie at residues 61 to 99 (DHDKTITAVDISIHGRIVTCSQDRNAYVWEPLSDGTYKP), 105 to 146 (RINR…WVSK), 151 to 190 (PIKSTINCLSWHANGVLLAAGGTDGFMRVFSGFIKGLDSK), 212 to 251 (YQGSYIHDVEWRSQMERIAYVAHDGTLNVVDYQSPVQSVN), and 349 to 383 (AHENAIVELRPFAESNGQITQVSSCGLDGKIVIYT).

This sequence belongs to the WD repeat ARPC1 family. In terms of assembly, component of the Arp2/3 complex composed of ARP2, ARP3, ARC40/p41-ARC, ARC35/p34-ARC, ARC18/p21-ARC, ARC19/p20-ARC and ARC16/p16-ARC.

It is found in the cytoplasm. It localises to the cytoskeleton. The protein resides in the actin patch. Its function is as follows. Functions as a component of the Arp2/3 complex which is involved in regulation of actin polymerization and together with an activating nucleation-promoting factor (NPF) mediates the formation of branched actin networks. The polypeptide is Actin-related protein 2/3 complex subunit 1 (ARC40) (Saccharomyces cerevisiae (strain ATCC 204508 / S288c) (Baker's yeast)).